We begin with the raw amino-acid sequence, 185 residues long: Alpha-S1-casein (185 aa).

A signal peptide spans Met-1–Ala-15. 10 positions are modified to phosphoserine: Ser-31, Ser-33, Ser-41, Ser-71, Ser-85, Ser-86, Ser-88, Ser-89, Ser-90, and Ser-91.

The protein belongs to the alpha-casein family. In terms of assembly, heteromultimers of alpha-s1 casein and kappa-casein; disulfide-linked. Post-translationally, not glycosylated. In terms of tissue distribution, mammary gland specific. Secreted in milk.

The protein resides in the secreted. Important role in the capacity of milk to transport calcium phosphate. Its function is as follows. Casoxin D acts as opioid antagonist and has vasorelaxing activity mediated by bradykinin B1 receptors. The chain is Alpha-S1-casein (CSN1S1) from Homo sapiens (Human).